The sequence spans 400 residues: Jasmonate-induced oxygenase 1 (400 aa).

Residues 248-349 (DVGACLRVNY…RVSLAFFYNP (102 aa)) form the Fe2OG dioxygenase domain. Residue Arg254 coordinates jasmonate. The 2-oxoglutarate site is built by Asn256 and Tyr258. Fe cation is bound by residues His273, Asp275, and His330. 2-oxoglutarate-binding residues include Arg340 and Ser342. The jasmonate site is built by Arg379 and Arg383.

It belongs to the iron/ascorbate-dependent oxidoreductase family. It depends on L-ascorbate as a cofactor. Fe(2+) is required as a cofactor.

The catalysed reaction is jasmonate + 2-oxoglutarate + O2 = (1R,2R)-12-hydroxyjasmonate + succinate + CO2. In terms of biological role, 2-oxoglutarate-dependent dioxygenase involved in the oxidation of jasmonate (JA), a stress-induced phytohormone synthesized in response to attack by pathogens and herbivores, which triggers the activation of defense responses via the JA-mediated signaling pathway. Converts JA to 12-hydroxyjasmonate (12OH-JA), an inactive form of JA. Prevents over-accumulation of JA and indirectly its bioactive form JA-Ile under stress response. Acts as a negative regulator of JA-mediated defense signaling, by contributing to 12OH-JA accumulation, which represses JA defense responses upon infection by the fungal pathogen Botrytis cinerea and the herbivorous caterpillar Mamestra brassicae. This Arabidopsis thaliana (Mouse-ear cress) protein is Jasmonate-induced oxygenase 1.